Consider the following 226-residue polypeptide: Ribonuclease 3 (226 aa).

Positions 6–128 (TKKIQKVLGY…LIGSIYLDSN (123 aa)) constitute an RNase III domain. Residue Glu41 participates in Mg(2+) binding. The active site involves Asp45. Positions 114 and 117 each coordinate Mg(2+). Glu117 is a catalytic residue. Residues 155 to 225 (DPKTRLQEYL…AQKALIKLGV (71 aa)) form the DRBM domain.

Belongs to the ribonuclease III family. In terms of assembly, homodimer. It depends on Mg(2+) as a cofactor.

It localises to the cytoplasm. The catalysed reaction is Endonucleolytic cleavage to 5'-phosphomonoester.. Functionally, digests double-stranded RNA. Involved in the processing of primary rRNA transcript to yield the immediate precursors to the large and small rRNAs (23S and 16S). Processes some mRNAs, and tRNAs when they are encoded in the rRNA operon. Processes pre-crRNA and tracrRNA of type II CRISPR loci if present in the organism. This Buchnera aphidicola subsp. Acyrthosiphon pisum (strain 5A) protein is Ribonuclease 3.